The chain runs to 304 residues: Ribonuclease Z (304 aa).

Zn(2+) is bound by residues H61, H63, D65, H66, H138, D206, and H265. Catalysis depends on D65, which acts as the Proton acceptor.

Belongs to the RNase Z family. Homodimer. Zn(2+) serves as cofactor.

The enzyme catalyses Endonucleolytic cleavage of RNA, removing extra 3' nucleotides from tRNA precursor, generating 3' termini of tRNAs. A 3'-hydroxy group is left at the tRNA terminus and a 5'-phosphoryl group is left at the trailer molecule.. Its function is as follows. Zinc phosphodiesterase, which displays some tRNA 3'-processing endonuclease activity. Probably involved in tRNA maturation, by removing a 3'-trailer from precursor tRNA. The sequence is that of Ribonuclease Z from Lachnoclostridium phytofermentans (strain ATCC 700394 / DSM 18823 / ISDg) (Clostridium phytofermentans).